Consider the following 220-residue polypeptide: Deoxyribose-phosphate aldolase (220 aa).

Residue Asp-89 is the Proton donor/acceptor of the active site. Catalysis depends on Lys-150, which acts as the Schiff-base intermediate with acetaldehyde. Lys-182 acts as the Proton donor/acceptor in catalysis.

It belongs to the DeoC/FbaB aldolase family. DeoC type 1 subfamily.

It is found in the cytoplasm. It catalyses the reaction 2-deoxy-D-ribose 5-phosphate = D-glyceraldehyde 3-phosphate + acetaldehyde. It functions in the pathway carbohydrate degradation; 2-deoxy-D-ribose 1-phosphate degradation; D-glyceraldehyde 3-phosphate and acetaldehyde from 2-deoxy-alpha-D-ribose 1-phosphate: step 2/2. In terms of biological role, catalyzes a reversible aldol reaction between acetaldehyde and D-glyceraldehyde 3-phosphate to generate 2-deoxy-D-ribose 5-phosphate. This Mycoplasmoides pirum (Mycoplasma pirum) protein is Deoxyribose-phosphate aldolase.